The chain runs to 201 residues: Recombination protein RecR (201 aa).

The C4-type zinc-finger motif lies at 60–75 (CSTCGNVDTADPCMIC). Residues 83 to 178 (GTIIVVEDVS…KVTRLAHGVP (96 aa)) enclose the Toprim domain.

Belongs to the RecR family.

Its function is as follows. May play a role in DNA repair. It seems to be involved in an RecBC-independent recombinational process of DNA repair. It may act with RecF and RecO. The protein is Recombination protein RecR of Mesorhizobium japonicum (strain LMG 29417 / CECT 9101 / MAFF 303099) (Mesorhizobium loti (strain MAFF 303099)).